The primary structure comprises 168 residues: Cyclin-dependent kinase 4 inhibitor C (168 aa).

ANK repeat units lie at residues 4–33 (PWGN…NVNA), 37–65 (FGRT…NPDL), 69–98 (TGFA…DVNI), and 102–132 (EGNL…NVGH).

The protein belongs to the CDKN2 cyclin-dependent kinase inhibitor family. Heterodimer of p18 with CDK6. In terms of tissue distribution, highest levels found in skeletal muscle. Also found in pancreas and heart.

In terms of biological role, interacts strongly with CDK6, weakly with CDK4. Inhibits cell growth and proliferation with a correlated dependence on endogenous retinoblastoma protein RB. This Homo sapiens (Human) protein is Cyclin-dependent kinase 4 inhibitor C (CDKN2C).